Here is a 348-residue protein sequence, read N- to C-terminus: Centromere protein N-B (348 aa).

This sequence belongs to the CENP-N/CHL4 family.

The protein localises to the nucleus. It localises to the chromosome. It is found in the centromere. Functionally, probable component of a centromeric complex involved in assembly of kinetochore proteins, mitotic progression and chromosome segregation. The chain is Centromere protein N-B (cenpn-b) from Xenopus laevis (African clawed frog).